The primary structure comprises 488 residues: Glutamyl-tRNA(Gln) amidotransferase subunit A (488 aa).

Catalysis depends on charge relay system residues Lys77 and Ser152. Catalysis depends on Ser176, which acts as the Acyl-ester intermediate.

This sequence belongs to the amidase family. GatA subfamily. As to quaternary structure, heterotrimer of A, B and C subunits.

It catalyses the reaction L-glutamyl-tRNA(Gln) + L-glutamine + ATP + H2O = L-glutaminyl-tRNA(Gln) + L-glutamate + ADP + phosphate + H(+). Allows the formation of correctly charged Gln-tRNA(Gln) through the transamidation of misacylated Glu-tRNA(Gln) in organisms which lack glutaminyl-tRNA synthetase. The reaction takes place in the presence of glutamine and ATP through an activated gamma-phospho-Glu-tRNA(Gln). This Streptococcus pyogenes serotype M18 (strain MGAS8232) protein is Glutamyl-tRNA(Gln) amidotransferase subunit A.